Here is a 517-residue protein sequence, read N- to C-terminus: 2-isopropylmalate synthase (517 aa).

The Pyruvate carboxyltransferase domain occupies 5-268 (IIIFDTTLRD…DTRINTQEIH (264 aa)). D14, H202, H204, and N238 together coordinate Mn(2+). Positions 393–517 (SLDVITSQTI…ADLKSHKISQ (125 aa)) are regulatory domain.

The protein belongs to the alpha-IPM synthase/homocitrate synthase family. LeuA type 1 subfamily. Homodimer. Requires Mn(2+) as cofactor.

The protein resides in the cytoplasm. It carries out the reaction 3-methyl-2-oxobutanoate + acetyl-CoA + H2O = (2S)-2-isopropylmalate + CoA + H(+). It participates in amino-acid biosynthesis; L-leucine biosynthesis; L-leucine from 3-methyl-2-oxobutanoate: step 1/4. Catalyzes the condensation of the acetyl group of acetyl-CoA with 3-methyl-2-oxobutanoate (2-ketoisovalerate) to form 3-carboxy-3-hydroxy-4-methylpentanoate (2-isopropylmalate). This is 2-isopropylmalate synthase from Histophilus somni (strain 2336) (Haemophilus somnus).